The primary structure comprises 972 residues: DNA cross-link repair 1A protein (972 aa).

The tract at residues 14 to 80 (YKSIRKRKPQ…SEDLDPCKDD (67 aa)) is disordered. Residues 23-37 (QSNPDSTSVSMQTVT) show a composition bias toward polar residues. Positions 39–54 (GKCRPKRKGSGNRKKS) are enriched in basic residues. Basic and acidic residues predominate over residues 64-80 (SEQRLRPSEDLDPCKDD). The segment at 105–135 (DGYCPSCQMPFSLLVVQTPRWHVAECLDTPG) adopts a UBZ4-type zinc-finger fold. Zn(2+) contacts are provided by C108, C111, H126, and C130. Disordered regions lie at residues 191–219 (KSSC…NNEC) and 552–623 (GEAC…TTDE). Residues 210–219 (NLKNVPNNEC) are compositionally biased toward polar residues.

Belongs to the DNA repair metallo-beta-lactamase (DRMBL) family. As to quaternary structure, binds PIAS1.

Its subcellular location is the nucleus. The catalysed reaction is a beta-lactam + H2O = a substituted beta-amino acid. In terms of biological role, may be required for DNA interstrand cross-link repair. This Gallus gallus (Chicken) protein is DNA cross-link repair 1A protein (DCLRE1A).